We begin with the raw amino-acid sequence, 374 residues long: Fanconi anemia group F protein (374 aa).

Belongs to the multisubunit FA complex composed of FANCA, FANCB, FANCC, FANCE, FANCF, FANCG, FANCL/PHF9 and FANCM. The complex is not found in FA patients. In complex with FANCA, FANCG and FANCL, but not with FANCC, nor FANCE, interacts with HES1; this interaction may be essential for the stability and nuclear localization of FA core complex proteins.

Its subcellular location is the nucleus. Functionally, DNA repair protein that may operate in a postreplication repair or a cell cycle checkpoint function. May be implicated in interstrand DNA cross-link repair and in the maintenance of normal chromosome stability. This Homo sapiens (Human) protein is Fanconi anemia group F protein (FANCF).